Consider the following 340-residue polypeptide: Protein LSM14 homolog car-1 (340 aa).

Residues Met1–Pro81 enclose the Sm domain. Residues Ser101 to Arg125 are compositionally biased toward low complexity. Residues Ser101–Gln148 form a disordered region. Residues Asn126–Gln148 are compositionally biased toward polar residues. Residues Val178–Asp214 form the DFDF domain. The FFD box motif lies at Ala227–Ser243. The TFG box signature appears at Thr251–Ala271. The disordered stretch occupies residues Tyr277–Gln340. Positions Gly280–Asn296 are enriched in gly residues. Low complexity predominate over residues Gly312–Tyr325.

This sequence belongs to the LSM14 family.

The protein localises to the nucleus. In terms of biological role, transcriptional regulator. Involved in modulating embryonic expression of ATP-dependent chaperone cdc-48.1. May play a role in mRNA gene silencing, and RNA granule (P-body) assembly. This is Protein LSM14 homolog car-1 from Caenorhabditis elegans.